Here is a 104-residue protein sequence, read N- to C-terminus: L-rhamnose mutarotase (104 aa).

Y18 contributes to the substrate binding site. Catalysis depends on H22, which acts as the Proton donor. Substrate-binding positions include Y41 and 76–77 (WW).

This sequence belongs to the rhamnose mutarotase family. Homodimer.

The protein resides in the cytoplasm. The enzyme catalyses alpha-L-rhamnose = beta-L-rhamnose. It functions in the pathway carbohydrate metabolism; L-rhamnose metabolism. Involved in the anomeric conversion of L-rhamnose. This is L-rhamnose mutarotase from Escherichia coli O127:H6 (strain E2348/69 / EPEC).